We begin with the raw amino-acid sequence, 282 residues long: NADPH-dependent 7-cyano-7-deazaguanine reductase (282 aa).

Position 88–90 (88–90) interacts with substrate; it reads IES. 90–91 contacts NADPH; sequence SK. Catalysis depends on cysteine 190, which acts as the Thioimide intermediate. Aspartate 197 serves as the catalytic Proton donor. 229–230 contributes to the substrate binding site; it reads HE. An NADPH-binding site is contributed by 258 to 259; it reads RG.

Belongs to the GTP cyclohydrolase I family. QueF type 2 subfamily. As to quaternary structure, homodimer.

The protein resides in the cytoplasm. It carries out the reaction 7-aminomethyl-7-carbaguanine + 2 NADP(+) = 7-cyano-7-deazaguanine + 2 NADPH + 3 H(+). Its pathway is tRNA modification; tRNA-queuosine biosynthesis. In terms of biological role, catalyzes the NADPH-dependent reduction of 7-cyano-7-deazaguanine (preQ0) to 7-aminomethyl-7-deazaguanine (preQ1). The sequence is that of NADPH-dependent 7-cyano-7-deazaguanine reductase from Citrobacter koseri (strain ATCC BAA-895 / CDC 4225-83 / SGSC4696).